The chain runs to 318 residues: Putative S-adenosyl-L-methionine-dependent methyltransferase BCG_0781c (318 aa).

S-adenosyl-L-methionine contacts are provided by residues D135 and 164-165 (DL).

Belongs to the UPF0677 family.

In terms of biological role, exhibits S-adenosyl-L-methionine-dependent methyltransferase activity. This is Putative S-adenosyl-L-methionine-dependent methyltransferase BCG_0781c from Mycobacterium bovis (strain BCG / Pasteur 1173P2).